The sequence spans 199 residues: ATP-dependent Clp protease proteolytic subunit (199 aa).

Residue Ser-97 is the Nucleophile of the active site. The active site involves His-122.

This sequence belongs to the peptidase S14 family. As to quaternary structure, fourteen ClpP subunits assemble into 2 heptameric rings which stack back to back to give a disk-like structure with a central cavity, resembling the structure of eukaryotic proteasomes.

It is found in the cytoplasm. It catalyses the reaction Hydrolysis of proteins to small peptides in the presence of ATP and magnesium. alpha-casein is the usual test substrate. In the absence of ATP, only oligopeptides shorter than five residues are hydrolyzed (such as succinyl-Leu-Tyr-|-NHMec, and Leu-Tyr-Leu-|-Tyr-Trp, in which cleavage of the -Tyr-|-Leu- and -Tyr-|-Trp bonds also occurs).. Functionally, cleaves peptides in various proteins in a process that requires ATP hydrolysis. Has a chymotrypsin-like activity. Plays a major role in the degradation of misfolded proteins. The protein is ATP-dependent Clp protease proteolytic subunit of Geotalea uraniireducens (strain Rf4) (Geobacter uraniireducens).